Consider the following 211-residue polypeptide: MSLFDKTHLVAQADALPGRNTPMPVATLHAVNGHSMTNVPAGMEVALFAMGCFWGVERLFWQLPGVYSTAAGYTGGYTPNPTYREVCSGQTGHAEAVRVVYDPQVISYEQLLQVFWENHDPAQGMRQGNDHGTQYRSAIYPLTPEQTAAAKASLARFQAAMNDAHDTRHITTEIATAKPFYYAEDDHQQYLYKNPHGYCGIGGIGVCLPPQ.

Residue Cys52 is part of the active site.

It belongs to the MsrA Met sulfoxide reductase family.

The enzyme catalyses L-methionyl-[protein] + [thioredoxin]-disulfide + H2O = L-methionyl-(S)-S-oxide-[protein] + [thioredoxin]-dithiol. It catalyses the reaction [thioredoxin]-disulfide + L-methionine + H2O = L-methionine (S)-S-oxide + [thioredoxin]-dithiol. In terms of biological role, has an important function as a repair enzyme for proteins that have been inactivated by oxidation. Catalyzes the reversible oxidation-reduction of methionine sulfoxide in proteins to methionine. In Klebsiella pneumoniae (strain 342), this protein is Peptide methionine sulfoxide reductase MsrA.